We begin with the raw amino-acid sequence, 107 residues long: MMKGGLAGLMKQAQQMQEKMKTAQAELAALEVNGQAAGGLVKVAISGKYELKRVQIDPGAMDDREMLEDLIVTAYTEAFKQVEAASTQLMSGATAGMPMPPGFKLPF.

Belongs to the YbaB/EbfC family. As to quaternary structure, homodimer.

The protein resides in the cytoplasm. Its subcellular location is the nucleoid. In terms of biological role, binds to DNA and alters its conformation. May be involved in regulation of gene expression, nucleoid organization and DNA protection. The polypeptide is Nucleoid-associated protein Pnuc_0701 (Polynucleobacter asymbioticus (strain DSM 18221 / CIP 109841 / QLW-P1DMWA-1) (Polynucleobacter necessarius subsp. asymbioticus)).